The following is a 300-amino-acid chain: ETS homologous factor (300 aa).

Residues 29–115 (PTCNVSSGFF…SNLQHLKWNG (87 aa)) form the PNT domain. The interval 181–203 (VAESPDMKKEQDHPVKSHTKKHN) is disordered. A compositionally biased stretch (basic and acidic residues) spans 185–195 (PDMKKEQDHPV). The segment at residues 207-289 (THLWEFIRDI…DGRRLVYKFG (83 aa)) is a DNA-binding region (ETS).

Belongs to the ETS family. As to expression, highly expressed in kidney and lung, weakly in skeletal muscle, heart, and liver, and not detected in brain, spleen or testis.

Its subcellular location is the nucleus. In terms of biological role, transcriptional activator that may play a role in regulating epithelial cell differentiation and proliferation. May act as a repressor for a specific subset of ETS/AP-1-responsive genes, and as a modulator of the nuclear response to mitogen-activated protein kinase signaling cascades. Binds to DNA sequences containing the consensus nucleotide core sequence GGAA. Involved in regulation of TNFRSF10B/DR5 expression through Ets-binding sequences on the TNFRSF10B/DR5 promoter. The protein is ETS homologous factor of Mus musculus (Mouse).